Here is a 430-residue protein sequence, read N- to C-terminus: MKIGIKVLGCPKNEADCDVLEAILKDRGHEIVSDIEEAEAVIIDTCGFIESAKKESIDEIITFANYKKYRPFFLCVKGCLVQRYSKELSKEIPEVDSWLGVLSPHQIAEAIEKATPYLVEKPTVVYEEAPRSCNNSFAYVKIADGCDRSCTFCSIPLFKGRFKSRSIESIYSEVERLVEIGVKEIILVAQDTTAYGVDLYNKAVLDQLLKKLNSIEGNFRIRVMYLHPDHLTDKMIDAICSLDKLLPYFDIPVQHGSDRILKQMGRIKNSEQLLELIAYIRSHNPDAAIRTSVMVGFPGETNDDFQKLLDFLEKAKFDRLGCFIYSDEEGTVSSSMKRKVSERIARERYENLLIFQSQIAYERLKRFVGKNLNVLIEQENELFYVARSHLDAPEVDGEVTVKKTREVDIPGYYTVRITDSDEYDLKGELI.

In terms of domain architecture, MTTase N-terminal spans 1–116 (MKIGIKVLGC…IAEAIEKATP (116 aa)). The [4Fe-4S] cluster site is built by cysteine 10, cysteine 46, cysteine 79, cysteine 146, cysteine 150, and cysteine 153. The Radical SAM core domain occupies 132 to 362 (SCNNSFAYVK…LIFQSQIAYE (231 aa)). In terms of domain architecture, TRAM spans 365–430 (KRFVGKNLNV…DEYDLKGELI (66 aa)).

This sequence belongs to the methylthiotransferase family. RimO subfamily. [4Fe-4S] cluster serves as cofactor.

It localises to the cytoplasm. It carries out the reaction L-aspartate(89)-[ribosomal protein uS12]-hydrogen + (sulfur carrier)-SH + AH2 + 2 S-adenosyl-L-methionine = 3-methylsulfanyl-L-aspartate(89)-[ribosomal protein uS12]-hydrogen + (sulfur carrier)-H + 5'-deoxyadenosine + L-methionine + A + S-adenosyl-L-homocysteine + 2 H(+). Its function is as follows. Catalyzes the methylthiolation of an aspartic acid residue of ribosomal protein uS12. The protein is Ribosomal protein uS12 methylthiotransferase RimO of Pseudothermotoga lettingae (strain ATCC BAA-301 / DSM 14385 / NBRC 107922 / TMO) (Thermotoga lettingae).